The chain runs to 457 residues: Argininosuccinate lyase (457 aa).

It belongs to the lyase 1 family. Argininosuccinate lyase subfamily.

It localises to the cytoplasm. The enzyme catalyses 2-(N(omega)-L-arginino)succinate = fumarate + L-arginine. It functions in the pathway amino-acid biosynthesis; L-arginine biosynthesis; L-arginine from L-ornithine and carbamoyl phosphate: step 3/3. This Sodalis glossinidius (strain morsitans) protein is Argininosuccinate lyase.